The following is an 853-amino-acid chain: DNA mismatch repair protein MutS (853 aa).

614–621 lines the ATP pocket; it reads GPNMGGKS.

It belongs to the DNA mismatch repair MutS family.

In terms of biological role, this protein is involved in the repair of mismatches in DNA. It is possible that it carries out the mismatch recognition step. This protein has a weak ATPase activity. The polypeptide is DNA mismatch repair protein MutS (Escherichia coli O6:H1 (strain CFT073 / ATCC 700928 / UPEC)).